Here is a 429-residue protein sequence, read N- to C-terminus: UDP-N-acetylglucosamine 1-carboxyvinyltransferase (429 aa).

Lys22 to Asn23 provides a ligand contact to phosphoenolpyruvate. Position 96 (Arg96) interacts with UDP-N-acetyl-alpha-D-glucosamine. Residue Cys120 is the Proton donor of the active site. A 2-(S-cysteinyl)pyruvic acid O-phosphothioketal modification is found at Cys120. Residues Arg125 to Leu129, Asp310, and Ile332 contribute to the UDP-N-acetyl-alpha-D-glucosamine site.

It belongs to the EPSP synthase family. MurA subfamily.

Its subcellular location is the cytoplasm. The catalysed reaction is phosphoenolpyruvate + UDP-N-acetyl-alpha-D-glucosamine = UDP-N-acetyl-3-O-(1-carboxyvinyl)-alpha-D-glucosamine + phosphate. The protein operates within cell wall biogenesis; peptidoglycan biosynthesis. Its function is as follows. Cell wall formation. Adds enolpyruvyl to UDP-N-acetylglucosamine. This chain is UDP-N-acetylglucosamine 1-carboxyvinyltransferase, found in Caulobacter vibrioides (strain ATCC 19089 / CIP 103742 / CB 15) (Caulobacter crescentus).